We begin with the raw amino-acid sequence, 224 residues long: MPAPGQGPRGPLLSMPGRRGALREPADFGSSLGAVLALLLLLLPACCPVRAQNDTEPIVLEGKCLVVCDSSPSGDGAVTSSLGISVRSGSAKVAFSATRSTNHEPSEMSNRTMTIYFDQVLVNIGNHFDLASSIFVAPRKGIYSFSFHVVKVYNRQTIQVSLMQNGYPVISAFAGDQDVTREAASNGVLLLMEREDKVHLKLERGNLMGGWKYSTFSGFLVFPL.

Positions 1–51 are cleaved as a signal peptide; that stretch reads MPAPGQGPRGPLLSMPGRRGALREPADFGSSLGAVLALLLLLLPACCPVRA. Residues Asn53 and Asn110 are each glycosylated (N-linked (GlcNAc...) asparagine). The C1q domain occupies 88–224; sequence SGSAKVAFSA…TFSGFLVFPL (137 aa).

In terms of assembly, homohexamer; disulfide-linked homotrimers. The trimers are assembled via the globular C1q domains. The trimers associate via N-terminal cysteine residues to form disulfide-linked hexamers. May form homooligomers or heterooligomers with CBLN1 and CBLN3 prior to secretion. Once secreted, does not interact with other CBLN family members. Interacts with GRID2, and more weakly with GRID1. Interacts with NRXN1 and NRXN2 long and short isoforms produced by alternative promoter usage. Weakly interacts with NRXN3 short isoform and not at all with NRXN3 long isoform. As to expression, expressed in various brain regions with higher levels in the olfactory bulb, cerebral cortex, certain thalamic and hypothalamic nuclei, superior and inferior colliculi and some brainstem nuclei. Highly expressed in the dorsal medial habenula.

The protein localises to the secreted. Its function is as follows. Acts as a synaptic organizer in specific subsets of neurons in the brain. Essential for long-term maintenance but not establishment of excitatory synapses. Functions as part of a trans-synaptic complex by binding to postsynaptic GRID1 and presynaptic neurexins. This interaction helps regulate the activity of NMDA and AMPA receptors at hippocampal synapses without affecting synapse formation. NRXN1B-CBLN2-GRID1 complex transduce presynaptic signals into postsynaptic NMDAR response. NRXN3B-CBLN2-GRID1 complex transduce presynaptic signals into postsynaptic AMPAR response. The chain is Cerebellin-2 (Cbln2) from Mus musculus (Mouse).